The following is a 188-amino-acid chain: dCTP deaminase (188 aa).

A dCTP-binding site is contributed by K109 to R114. E135 functions as the Proton donor/acceptor in the catalytic mechanism. Residues Q154, Y168, and Q178 each contribute to the dCTP site.

This sequence belongs to the dCTP deaminase family. In terms of assembly, homotrimer.

The catalysed reaction is dCTP + H2O + H(+) = dUTP + NH4(+). Its pathway is pyrimidine metabolism; dUMP biosynthesis; dUMP from dCTP (dUTP route): step 1/2. Functionally, catalyzes the deamination of dCTP to dUTP. This Helicobacter pylori (strain G27) protein is dCTP deaminase.